The primary structure comprises 78 residues: Beta-defensin 105 (78 aa).

The first 27 residues, 1-27, serve as a signal peptide directing secretion; that stretch reads MALIRKTFYFLFAMFFILVQLPSGCQA. Cystine bridges form between Cys43-Cys74, Cys53-Cys67, and Cys57-Cys73.

It belongs to the beta-defensin family. As to expression, specifically expressed in testis.

It is found in the secreted. Functionally, has antibacterial activity. This chain is Beta-defensin 105 (DEFB105A), found in Homo sapiens (Human).